The following is a 346-amino-acid chain: SUMO-activating enzyme subunit 1 (346 aa).

Position 1 is an N-acetylmethionine (methionine 1). Valine 2 is modified (N-acetylvaline; in SUMO-activating enzyme subunit 1, N-terminally processed). A Phosphoserine modification is found at serine 12. Lysine 198 carries the N6-acetyllysine modification.

It belongs to the ubiquitin-activating E1 family. As to quaternary structure, heterodimer of SAE1 and UBA2/SAE2. The heterodimer corresponds to the two domains that are encoded on a single polypeptide chain in ubiquitin-activating enzyme E1. Interacts with UBE2I. As to expression, expression level increases during S phase and drops in G2 phase (at protein level).

The protein localises to the nucleus. It functions in the pathway protein modification; protein sumoylation. In terms of biological role, the heterodimer acts as an E1 ligase for SUMO1, SUMO2, SUMO3, and probably SUMO4. It mediates ATP-dependent activation of SUMO proteins followed by formation of a thioester bond between a SUMO protein and a conserved active site cysteine residue on UBA2/SAE2. This Homo sapiens (Human) protein is SUMO-activating enzyme subunit 1 (SAE1).